Reading from the N-terminus, the 800-residue chain is DEP domain-containing protein 1A (800 aa).

Residues 24-108 enclose the DEP domain; that stretch reads FRAGMPLKKH…DNSQLYRFPS (85 aa). 3 disordered regions span residues 147–173, 306–326, and 459–485; these read ETLENVDPETQESPVGSSSGETERSRE, SQPGKRKNQEEPNCPQPAKNP, and INTSGSSVSSQLSADLRRNNSRPARAR. In terms of domain architecture, Rho-GAP spans 281–321; it reads PLLTYQYYELFVNILVMCGYITTPKSQPGKRKNQEEPNCPQ. A compositionally biased stretch (low complexity) spans 459 to 468; sequence INTSGSSVSS.

The protein is DEP domain-containing protein 1A (depdc1a) of Danio rerio (Zebrafish).